We begin with the raw amino-acid sequence, 1099 residues long: MPKRTDLKSVLVIGSGPIVIGQAAEFDYSGTQALRVLKEEGLRVILVNSNPATIMTDPEFADATYVEPITPEVVEKIIAKERPDAILPTLGGQTALNTAIALDKNGVLEKYNVELIGANIAAIELGEDREKFKGVVERCGAESARSHIIHSMDEALKAAEDLGYPMVVRPSFTMGGLGSGLAYTEDDLRRIVGQGLQYSPTSEVLLEESILGWKEYELEMMRDKNDNVVVVCSIENFDPVGVHTGDSITVAPALTLTDREYQRLRDISIAVIREVGVDTGGCNIQFAVEPDTGRVVVIEMNPRVSRSSALASKATGFAIAKIATKLSLGYTLDEIPNDITQKTPASFEPTLDYVVVKVPRFAFEKFPAADPTLTTTMKSVGEAMAMGRNFTEALQKALRSLEQKGSQLDFSHVPEWEVPELIEKAKRPTTERLHQVQRALLGGATVEQLFEATKIDPWYLDQLQLLNEISHEIRKSTALTPEMLQRAKRHGFSDEQIGALTNNQEAVVRGVRQALGIRPVYKTVDTCAAEFAAYTPYHYSSYDEEDEVALHSKPSIIILGSGPNRIGQGIEFDYSCVHASMALRKAGYETVMVNCNPETVSTDYDVSTRLYFEPLTLEDVLEVIAAEERTGGVMGVFVQLGGQTPLKLAQQLADAGVPILGTSPEAIDLAEHRGAFSRVLDEAGLISPKNGTAVSFEDAKKIADEIGYPVLVRPSYVLGGRGMEIVYDEPNLSRYIANATEITTEHPVLIDRFLEDAVEIDVDALYDGTEMYLGGIMEHIEEAGIHSGDSACVLPPITLGNNVIERVRTATLAIAEGVGVRGLINIQFALASDVLYVLEANPRASRTVPFVSKATGVQMAKAAALIGTGVTINQLRSAYKMLPETGDGSTLPFDAPVSVKEAVLPFSRFRTPEGKVVDSLLGPEMRSTGEVMGIDKHFDTAFAKSQAAANNALPTEGKIFVSVANRDKRSVIMGVKRLSDLGFEIVSTGGTADVLRRNGIQATPVRKVAEGSSAEGEGTIADLIVAGEIDMVFNTPSGGEARIDGYELRAAATSIGIPCITTVAEFNAAVQAIEAQRTYEWSVTSLQEHAENLKALQNG.

The carboxyphosphate synthetic domain stretch occupies residues 1–402; the sequence is MPKRTDLKSV…ALQKALRSLE (402 aa). ATP-binding residues include R129, R169, G175, G176, E208, I210, E215, G241, V242, H243, Q285, and E299. The ATP-grasp 1 domain maps to 133 to 328; sequence KGVVERCGAE…IAKIATKLSL (196 aa). Mg(2+) contacts are provided by Q285, E299, and N301. Residues Q285, E299, and N301 each contribute to the Mn(2+) site. The tract at residues 403–546 is oligomerization domain; the sequence is QKGSQLDFSH…YHYSSYDEED (144 aa). A carbamoyl phosphate synthetic domain region spans residues 547-950; that stretch reads EVALHSKPSI…AFAKSQAAAN (404 aa). Positions 677–868 constitute an ATP-grasp 2 domain; sequence SRVLDEAGLI…MAKAAALIGT (192 aa). ATP-binding residues include R713, R752, L754, E759, G784, I785, H786, S787, Q827, and E839. Mg(2+) contacts are provided by Q827, E839, and N841. Mn(2+) is bound by residues Q827, E839, and N841. The 149-residue stretch at 951–1099 folds into the MGS-like domain; that stretch reads NALPTEGKIF…AENLKALQNG (149 aa). Positions 951–1099 are allosteric domain; sequence NALPTEGKIF…AENLKALQNG (149 aa).

The protein belongs to the CarB family. Composed of two chains; the small (or glutamine) chain promotes the hydrolysis of glutamine to ammonia, which is used by the large (or ammonia) chain to synthesize carbamoyl phosphate. Tetramer of heterodimers (alpha,beta)4. Mg(2+) serves as cofactor. The cofactor is Mn(2+).

It catalyses the reaction hydrogencarbonate + L-glutamine + 2 ATP + H2O = carbamoyl phosphate + L-glutamate + 2 ADP + phosphate + 2 H(+). The catalysed reaction is hydrogencarbonate + NH4(+) + 2 ATP = carbamoyl phosphate + 2 ADP + phosphate + 2 H(+). The protein operates within amino-acid biosynthesis; L-arginine biosynthesis; carbamoyl phosphate from bicarbonate: step 1/1. It participates in pyrimidine metabolism; UMP biosynthesis via de novo pathway; (S)-dihydroorotate from bicarbonate: step 1/3. Its function is as follows. Large subunit of the glutamine-dependent carbamoyl phosphate synthetase (CPSase). CPSase catalyzes the formation of carbamoyl phosphate from the ammonia moiety of glutamine, carbonate, and phosphate donated by ATP, constituting the first step of 2 biosynthetic pathways, one leading to arginine and/or urea and the other to pyrimidine nucleotides. The large subunit (synthetase) binds the substrates ammonia (free or transferred from glutamine from the small subunit), hydrogencarbonate and ATP and carries out an ATP-coupled ligase reaction, activating hydrogencarbonate by forming carboxy phosphate which reacts with ammonia to form carbamoyl phosphate. The polypeptide is Carbamoyl phosphate synthase large chain (Arthrobacter sp. (strain FB24)).